We begin with the raw amino-acid sequence, 522 residues long: Tetratricopeptide repeat and J domain-containing co-chaperone DNJ1 (522 aa).

A signal peptide spans Met-1–Gly-22. 7 TPR repeats span residues Ala-29–Gly-62, Tyr-63–Phe-96, Val-97–Ser-130, Gly-142–Ser-175, Thr-210–Ser-243, Leu-256–Phe-289, and Val-356–Ser-389. In terms of domain architecture, J spans Asp-410 to Asp-471. A disordered region spans residues Gln-465–Phe-494.

The protein resides in the endoplasmic reticulum lumen. In terms of biological role, endoplasmic reticulum co-chaperone crucial for survival and virulence factor production at elevated temperatures representative of febrile patients during infection. Contributes to virulence in a mouse model of cryptococcosis. With chaperone CNE1, coordinately maintains ER homeostasis and contributes to maintenance of cell wall architecture. The protein is Tetratricopeptide repeat and J domain-containing co-chaperone DNJ1 of Cryptococcus neoformans var. grubii serotype A (strain H99 / ATCC 208821 / CBS 10515 / FGSC 9487) (Filobasidiella neoformans var. grubii).